The primary structure comprises 600 residues: Zinc metalloproteinase-disintegrin-like stejnihagin-A (600 aa).

The first 20 residues, 1–20 (MIEVLLVTICLAVFPYQGSS), serve as a signal peptide directing secretion. Positions 21–191 (IILESGNVND…KASQLVVTAE (171 aa)) are excised as a propeptide. Residue Q192 is modified to Pyrrolidone carboxylic acid. One can recognise a Peptidase M12B domain in the interval 198–389 (RYVKLAIVAD…YNPQCILNAP (192 aa)). Cystine bridges form between C306–C384, C346–C368, and C348–C351. N-linked (GlcNAc...) asparagine glycosylation occurs at N317. A Zn(2+)-binding site is contributed by H331. The active site involves E332. 2 residues coordinate Zn(2+): H335 and H341. N367 is a glycosylation site (N-linked (GlcNAc...) asparagine). Positions 397 to 483 (PPVCGNELLE…DCPTDDFHRN (87 aa)) constitute a Disintegrin domain. Residues V399, N402, L404, E406, E409, and D412 each contribute to the Ca(2+) site. 14 cysteine pairs are disulfide-bonded: C400/C429, C411/C424, C413/C419, C423/C446, C437/C443, C442/C468, C455/C475, C462/C494, C487/C499, C506/C556, C521/C565, C534/C544, C551/C587, and C581/C593. The D/ECD-tripeptide motif lies at 461–463 (ECD). An N-linked (GlcNAc...) asparagine glycan is attached at N568.

This sequence belongs to the venom metalloproteinase (M12B) family. P-III subfamily. P-IIIa sub-subfamily. Monomer. Requires Zn(2+) as cofactor. As to expression, expressed by the venom gland.

The protein resides in the secreted. This metalloproteinase-disintegrin-like impairs hemostasis in the envenomed animal. The sequence is that of Zinc metalloproteinase-disintegrin-like stejnihagin-A from Trimeresurus stejnegeri (Chinese green tree viper).